The following is a 346-amino-acid chain: Superficial pseudohyphal growth protein 1 (346 aa).

Positions 289-308 (NFGEDEDNEEDNEDDLPDAA) are disordered. Acidic residues predominate over residues 291–305 (GEDEDNEEDNEDDLP).

The protein resides in the nucleus. Functionally, probable transcription factor required for superficial pseudohyphal development in response to nitrogen starvation. This is Superficial pseudohyphal growth protein 1 (SFG1) from Saccharomyces cerevisiae (strain ATCC 204508 / S288c) (Baker's yeast).